The chain runs to 79 residues: UPF0654 protein C11D3.01c (79 aa).

The interval 1 to 79 (MPNPGNVIGG…RAQEELENLE (79 aa)) is disordered. The span at 22 to 45 (EETKQREKEYLEEHEGEVGEEHQK) shows a compositional bias: basic and acidic residues.

Belongs to the UPF0654 (con-6) family.

This Schizosaccharomyces pombe (strain 972 / ATCC 24843) (Fission yeast) protein is UPF0654 protein C11D3.01c.